Here is a 420-residue protein sequence, read N- to C-terminus: MTLLALGINHKTAPVSLRERVTFSPESMDQALNSLLQQPLVQGGVVLSTCNRTELYLSVEQQENLHEQLTAWLCNYHKLSPDDVRQSLYWHHGNDAVRHLMRVASGLDSQVLGEPQILGQVKKAFAESQRGQSLSSELERLFQKSFSVAKRVRTETEIGASAVSVAFAACSLARQIFESLSELHVLLVGAGETIELVARHLREHQVKHMIIANRTRERAQSLASEVGAEVITLPEIDARLADADIIISSTASPLPIIGKGMVERALKTRRNQPMLFIDIAVPRDIEPEVGKLSNAYLYSVDDLQAIIQHNMAQRQAAAVQAESIVQQESMNFMTWLRAQGAVETIRDYRSQAEQVRSEMTAKALVAIEQGANVEQVINELAYKLTNRLIHAPTKSLQQAASDGDMERLQLLRDSLGLDQH.

Substrate is bound by residues 49–52, serine 109, 114–116, and glutamine 120; these read TCNR and EPQ. Cysteine 50 serves as the catalytic Nucleophile. 189–194 is a binding site for NADP(+); the sequence is GAGETI.

It belongs to the glutamyl-tRNA reductase family. In terms of assembly, homodimer.

The catalysed reaction is (S)-4-amino-5-oxopentanoate + tRNA(Glu) + NADP(+) = L-glutamyl-tRNA(Glu) + NADPH + H(+). It functions in the pathway porphyrin-containing compound metabolism; protoporphyrin-IX biosynthesis; 5-aminolevulinate from L-glutamyl-tRNA(Glu): step 1/2. In terms of biological role, catalyzes the NADPH-dependent reduction of glutamyl-tRNA(Glu) to glutamate 1-semialdehyde (GSA). This chain is Glutamyl-tRNA reductase, found in Yersinia pseudotuberculosis serotype O:1b (strain IP 31758).